Reading from the N-terminus, the 217-residue chain is UPF0502 protein ESA_02280 (217 aa).

It belongs to the UPF0502 family.

The sequence is that of UPF0502 protein ESA_02280 from Cronobacter sakazakii (strain ATCC BAA-894) (Enterobacter sakazakii).